We begin with the raw amino-acid sequence, 82 residues long: Ubiquinol-cytochrome-c reductase complex assembly factor 3 (82 aa).

Residues 1–6 (METVRR) lie on the Mitochondrial matrix side of the membrane. The chain crosses the membrane as a helical span at residues 7-29 (IVKGTLLLGFCTGIGGDLWVLVA). At 30–82 (PGQERRLEMRMNYPEANPPMLAEAHKRNEMVLKVIEESAKTNENMARRSPWSS) the chain is on the mitochondrial intermembrane side.

The protein belongs to the UQCC3 family. In terms of assembly, associates with the ubiquinol-cytochrome c reductase complex (mitochondrial respiratory chain complex III or cytochrome b-c1 complex).

The protein resides in the mitochondrion inner membrane. Functionally, required for the assembly of the ubiquinol-cytochrome c reductase complex (mitochondrial respiratory chain complex III or cytochrome b-c1 complex), mediating cytochrome b recruitment and probably stabilization within the complex. Thereby, plays an important role in ATP production by mitochondria. Cardiolipin-binding protein, it may also control the cardiolipin composition of mitochondria membranes and their morphology. This Xenopus laevis (African clawed frog) protein is Ubiquinol-cytochrome-c reductase complex assembly factor 3.